The sequence spans 199 residues: FMN-dependent NADH:quinone oxidoreductase (199 aa).

FMN contacts are provided by residues Ser9 and 95–98 (MYNF).

The protein belongs to the azoreductase type 1 family. Homodimer. Requires FMN as cofactor.

The enzyme catalyses 2 a quinone + NADH + H(+) = 2 a 1,4-benzosemiquinone + NAD(+). It catalyses the reaction N,N-dimethyl-1,4-phenylenediamine + anthranilate + 2 NAD(+) = 2-(4-dimethylaminophenyl)diazenylbenzoate + 2 NADH + 2 H(+). Quinone reductase that provides resistance to thiol-specific stress caused by electrophilic quinones. Functionally, also exhibits azoreductase activity. Catalyzes the reductive cleavage of the azo bond in aromatic azo compounds to the corresponding amines. This Dechloromonas aromatica (strain RCB) protein is FMN-dependent NADH:quinone oxidoreductase.